Consider the following 427-residue polypeptide: Serine hydroxymethyltransferase (427 aa).

(6S)-5,6,7,8-tetrahydrofolate-binding positions include leucine 122 and 126–128 (GHL). Lysine 231 carries the N6-(pyridoxal phosphate)lysine modification. Residue 355–357 (SPF) participates in (6S)-5,6,7,8-tetrahydrofolate binding.

The protein belongs to the SHMT family. Homodimer. The cofactor is pyridoxal 5'-phosphate.

It is found in the cytoplasm. The enzyme catalyses (6R)-5,10-methylene-5,6,7,8-tetrahydrofolate + glycine + H2O = (6S)-5,6,7,8-tetrahydrofolate + L-serine. Its pathway is one-carbon metabolism; tetrahydrofolate interconversion. It participates in amino-acid biosynthesis; glycine biosynthesis; glycine from L-serine: step 1/1. Functionally, catalyzes the reversible interconversion of serine and glycine with tetrahydrofolate (THF) serving as the one-carbon carrier. This reaction serves as the major source of one-carbon groups required for the biosynthesis of purines, thymidylate, methionine, and other important biomolecules. Also exhibits THF-independent aldolase activity toward beta-hydroxyamino acids, producing glycine and aldehydes, via a retro-aldol mechanism. The polypeptide is Serine hydroxymethyltransferase (Synechococcus sp. (strain ATCC 27144 / PCC 6301 / SAUG 1402/1) (Anacystis nidulans)).